A 491-amino-acid polypeptide reads, in one-letter code: tRNA-2-methylthio-N(6)-dimethylallyladenosine synthase (491 aa).

An MTTase N-terminal domain is found at 3 to 119; sequence RSYQIRTYGC…LPTLLERARH (117 aa). [4Fe-4S] cluster-binding residues include C12, C48, C82, C156, C160, and C163. A Radical SAM core domain is found at 142–372; it reads RESAYSGWVS…IELQNQISWD (231 aa). In terms of domain architecture, TRAM spans 375–446; sequence KELVGRSVEL…PHHLVADSEI (72 aa).

It belongs to the methylthiotransferase family. MiaB subfamily. In terms of assembly, monomer. [4Fe-4S] cluster serves as cofactor.

It is found in the cytoplasm. The enzyme catalyses N(6)-dimethylallyladenosine(37) in tRNA + (sulfur carrier)-SH + AH2 + 2 S-adenosyl-L-methionine = 2-methylsulfanyl-N(6)-dimethylallyladenosine(37) in tRNA + (sulfur carrier)-H + 5'-deoxyadenosine + L-methionine + A + S-adenosyl-L-homocysteine + 2 H(+). Functionally, catalyzes the methylthiolation of N6-(dimethylallyl)adenosine (i(6)A), leading to the formation of 2-methylthio-N6-(dimethylallyl)adenosine (ms(2)i(6)A) at position 37 in tRNAs that read codons beginning with uridine. This chain is tRNA-2-methylthio-N(6)-dimethylallyladenosine synthase, found in Saccharopolyspora erythraea (strain ATCC 11635 / DSM 40517 / JCM 4748 / NBRC 13426 / NCIMB 8594 / NRRL 2338).